Reading from the N-terminus, the 551-residue chain is uncharacterized protein (551 aa).

Residues M1–W36 constitute a mitochondrion transit peptide. A coiled-coil region spans residues T203–E315. Positions R354–K389 are disordered. Residues P366 to G384 are compositionally biased toward polar residues. Residues K405–S439 are a coiled coil. The tract at residues L519–D551 is disordered. Over residues M541–D551 the composition is skewed to polar residues.

In terms of assembly, interacts with NOD2.

It localises to the mitochondrion. This is an uncharacterized protein from Homo sapiens (Human).